Here is an 808-residue protein sequence, read N- to C-terminus: Aminotransferase ALT4 (808 aa).

Belongs to the class-II pyridoxal-phosphate-dependent aminotransferase family. BioF subfamily. It depends on pyridoxal 5'-phosphate as a cofactor.

It participates in mycotoxin biosynthesis. Its function is as follows. Aminotransferase; part of the gene cluster that mediates the biosynthesis of the host-selective toxins (HSTs) AAL-toxins, sphinganine-analog mycotoxins responsible for Alternaria stem canker on tomato by the tomato pathotype. The biosynthesis starts with the polyketide synthase ALT1-catalyzed C-16 carbon chain assembly from one starter acetyl-CoA unit with malonyl-CoA extender units. ALT1 also selectively transfers methyl groups at the first and the third cycle of chain elongation for AAL toxin. The C-16 polyketide chain is released from the enzyme by a nucleophilic attack of a carbanion, which is derived from R-carbon of glycin by decarboxylation, on the carbonyl carbon of polyketide acyl chain. This step is probably catalyzed by a pyridoxal 5'-phosphate-dependent aminoacyl transferase ALT4. The respective functions of the other enzymes encoded by the cluster have still to be elucidated. The sphingosine N-acyltransferase-like protein ALT7 seems not to act as a resistance/self-tolerance factor against the toxin in the toxin biosynthetic gene cluster, contrary to what is expected. The polypeptide is Aminotransferase ALT4 (Alternaria alternata (Alternaria rot fungus)).